The following is a 707-amino-acid chain: Acyl-CoA ligase 891, peroxisomal (707 aa).

An ATP-binding site is contributed by 259-270 (INYTSGTTGPPK). The fatty acid-binding stretch occupies residues 525–549 (DGWFRTGDVCTVDAQGRFIIIDRRK). The Peroxisome targeting signal signature appears at 705–707 (AKL).

The protein belongs to the ATP-dependent AMP-binding enzyme family.

It localises to the peroxisome matrix. The enzyme catalyses (4E,8E)-10-(4-hydroxy-6-methoxy-7-methyl-3-oxo-1,3-dihydro-2-benzofuran-5-yl)-4,8-dimethyldeca-4,8-dienoate + ATP + CoA = (4E,8E)-10-(4-hydroxy-6-methoxy-7-methyl-3-oxo-1,3-dihydro-2-benzofuran-5-yl)-4,8-dimethyldeca-4,8-dienoyl-CoA + AMP + diphosphate. Its pathway is secondary metabolite biosynthesis; terpenoid biosynthesis. In terms of biological role, acyl-CoA ligase involved in the biosynthesis of mycophenolic acid (MPA), the first isolated antibiotic natural product in the world obtained from a culture of Penicillium brevicompactum in 1893. The peroxisomal acyl-CoA ligase 891 converts the intermediate MFDHMP-3C into MFDHMP-3C-CoA which impairs its diffusion from the peroxisome. The first step of the pathway is the synthesis of 5-methylorsellinic acid (5MOA) by the cytosolic polyketide synthase mpaC. 5MOA is then converted to the phthalide compound 5,7-dihydroxy-4,6-dimethylphthalide (DHMP) by the endoplasmic reticulum-bound cytochrome P450 monooxygenase mpaDE. MpaDE first catalyzes hydroxylation of 5-MOA to 4,6-dihydroxy-2-(hydroxymethyl)-3-methylbenzoic acid (DHMB). MpaDE then acts as a lactone synthase that catalyzes the ring closure to convert DHMB into DHMP. The next step is the prenylation of DHMP by the Golgi apparatus-associated prenyltransferase mpaA to yield farnesyl-DHMP (FDHMP). The ER-bound oxygenase mpaB then mediates the oxidative cleavage the C19-C20 double bond in FDHMP to yield FDHMP-3C via a mycophenolic aldehyde intermediate. The O-methyltransferase mpaG catalyzes the methylation of FDHMP-3C to yield MFDHMP-3C. After the cytosolic methylation of FDHMP-3C, MFDHMP-3C enters into peroxisomes probably via free diffusion due to its low molecular weight. Upon a peroxisomal CoA ligation reaction, catalyzed by a beta-oxidation component enzyme acyl-CoA ligase ACL891, MFDHMP-3C-CoA would then be restricted to peroxisomes for the following beta-oxidation pathway steps. The peroxisomal beta-oxidation machinery than converts MFDHMP-3C-CoA into MPA_CoA, via a beta-oxidation chain-shortening process. Finally mpaH acts as a peroxisomal acyl-CoA hydrolase with high substrate specificity toward MPA-CoA to release the final product MPA. The chain is Acyl-CoA ligase 891, peroxisomal from Penicillium brevicompactum.